A 365-amino-acid chain; its full sequence is Tubulin-like protein CetZ (365 aa).

Residues 10 to 14, 103 to 105, Glu-136, Asn-163, and Asn-181 contribute to the GTP site; these read QCGGK and GTG.

This sequence belongs to the CetZ family.

Its subcellular location is the cytoplasm. Its function is as follows. Involved in cell shape control. The polypeptide is Tubulin-like protein CetZ (Pyrococcus abyssi (strain GE5 / Orsay)).